A 254-amino-acid chain; its full sequence is MSINIGEISIPDLPIFFSMFLTIYLIAYFIVFRNWKPQIRPEASSCLISIFHGSPAVFLATRAVFSSSERSFASANTAAQNTVLDFSVAYFLTDLFHYIVFNPNDVLFIGHHVATLFVFLTCRFLVFHGACAILGLLILAEVTSACQNAWTLAGARKNDPESRLAVKVYDLLSPPFYAFYSIVRGVLGPLFFGKMVAFYARGGAHGVIPNWLWISWAIVVGIAITVSILWIWNLWIELFSERKANKIRVDKKIR.

The next 6 helical transmembrane spans lie at 12–32 (DLPI…FIVF), 45–65 (SCLI…RAVF), 82–101 (TVLD…YIVF), 124–144 (FLVF…EVTS), 172–192 (LSPP…PLFF), and 211–231 (WLWI…ILWI). A TLC domain is found at 38-248 (QIRPEASSCL…FSERKANKIR (211 aa)).

Its subcellular location is the membrane. The polypeptide is TLC domain-containing protein At5g14285 (Arabidopsis thaliana (Mouse-ear cress)).